The sequence spans 318 residues: Acetyl-coenzyme A carboxylase carboxyl transferase subunit alpha (318 aa).

Positions 38–292 constitute a CoA carboxyltransferase C-terminal domain; sequence KLEKRLAKLE…NKTITKSLHA (255 aa).

It belongs to the AccA family. As to quaternary structure, acetyl-CoA carboxylase is a heterohexamer composed of biotin carboxyl carrier protein (AccB), biotin carboxylase (AccC) and two subunits each of ACCase subunit alpha (AccA) and ACCase subunit beta (AccD).

It localises to the cytoplasm. It carries out the reaction N(6)-carboxybiotinyl-L-lysyl-[protein] + acetyl-CoA = N(6)-biotinyl-L-lysyl-[protein] + malonyl-CoA. The protein operates within lipid metabolism; malonyl-CoA biosynthesis; malonyl-CoA from acetyl-CoA: step 1/1. In terms of biological role, component of the acetyl coenzyme A carboxylase (ACC) complex. First, biotin carboxylase catalyzes the carboxylation of biotin on its carrier protein (BCCP) and then the CO(2) group is transferred by the carboxyltransferase to acetyl-CoA to form malonyl-CoA. The chain is Acetyl-coenzyme A carboxylase carboxyl transferase subunit alpha from Listeria welshimeri serovar 6b (strain ATCC 35897 / DSM 20650 / CCUG 15529 / CIP 8149 / NCTC 11857 / SLCC 5334 / V8).